A 948-amino-acid chain; its full sequence is Bifunctional uridylyltransferase/uridylyl-removing enzyme (948 aa).

The interval 1 to 372 is uridylyltransferase; the sequence is METHHIDFST…RFANRSRKIP (372 aa). The interval 373-728 is uridylyl-removing; that stretch reads GTVEFVEDRG…VRTDSFHAIT (356 aa). In terms of domain architecture, HD spans 489–605; it reads VDEHLIRAVE…IDFADRVQSL (117 aa). ACT domains are found at residues 729-810 and 840-921; these read EITV…EVIA and VIEV…ERMP.

Belongs to the GlnD family. Requires Mg(2+) as cofactor.

It carries out the reaction [protein-PII]-L-tyrosine + UTP = [protein-PII]-uridylyl-L-tyrosine + diphosphate. The enzyme catalyses [protein-PII]-uridylyl-L-tyrosine + H2O = [protein-PII]-L-tyrosine + UMP + H(+). With respect to regulation, uridylyltransferase (UTase) activity is inhibited by glutamine, while glutamine activates uridylyl-removing (UR) activity. Modifies, by uridylylation and deuridylylation, the PII regulatory proteins (GlnB and homologs), in response to the nitrogen status of the cell that GlnD senses through the glutamine level. Under low glutamine levels, catalyzes the conversion of the PII proteins and UTP to PII-UMP and PPi, while under higher glutamine levels, GlnD hydrolyzes PII-UMP to PII and UMP (deuridylylation). Thus, controls uridylylation state and activity of the PII proteins, and plays an important role in the regulation of nitrogen fixation and metabolism. The polypeptide is Bifunctional uridylyltransferase/uridylyl-removing enzyme (Rhizobium tropici).